Here is a 763-residue protein sequence, read N- to C-terminus: Phosphoglycerol transferase I (763 aa).

A run of 4 helical transmembrane segments spans residues 1 to 21 (MSELLSFALFLASVLIYAWKA), 26 to 46 (WWFAATLTVLGLFVVLNITLF), 77 to 97 (ILPGIGIVLGLTAVFGALGWI), and 108 to 128 (FGYSLLALLLALGSVDASPAF).

It belongs to the OpgB family.

Its subcellular location is the cell inner membrane. The catalysed reaction is a phosphatidylglycerol + a membrane-derived-oligosaccharide D-glucose = a 1,2-diacyl-sn-glycerol + a membrane-derived-oligosaccharide 6-(glycerophospho)-D-glucose.. It participates in glycan metabolism; osmoregulated periplasmic glucan (OPG) biosynthesis. Functionally, transfers a phosphoglycerol residue from phosphatidylglycerol to the membrane-bound nascent glucan backbones. The sequence is that of Phosphoglycerol transferase I from Escherichia coli (strain SMS-3-5 / SECEC).